The sequence spans 503 residues: Legumin J (503 aa).

The signal sequence occupies residues 1–22 (MSKPFLSLLSLSLLLFASACLA). 2 disulfides stabilise this stretch: cysteine 33–cysteine 66 and cysteine 109–cysteine 329. Positions 38-257 (INALEPDHRV…TFNTEEDTAK (220 aa)) constitute a Cupin type-1 1 domain. Disordered stretches follow at residues 111–140 (ETYE…RRFR), 185–235 (FYLG…EGNS), and 253–323 (EDTA…RKNG). A compositionally biased stretch (low complexity) spans 118–129 (SSQSRQESRQQQ). 2 stretches are compositionally biased toward basic and acidic residues: residues 254 to 268 (DTAK…ERSQ) and 282 to 300 (KGKE…HREE). A compositionally biased stretch (acidic residues) spans 301–312 (KEEEEEEEEDEE). Over residues 313-323 (EKQRSEERKNG) the composition is skewed to basic and acidic residues. The 148-residue stretch at 335-482 (ENIADAARAD…AFGLRQRQVT (148 aa)) folds into the Cupin type-1 2 domain.

The protein belongs to the 11S seed storage protein (globulins) family. In terms of assembly, hexamer; each subunit is composed of an acidic and a basic chain derived from a single precursor and linked by a disulfide bond.

Functionally, this protein found in the seeds of many leguminous and non-leguminous plants is the source of sulfur-containing amino acids in seed meals. This Pisum sativum (Garden pea) protein is Legumin J (LEGJ).